A 59-amino-acid polypeptide reads, in one-letter code: Chromatin protein Cren7 (59 aa).

It belongs to the Cren7 family. In terms of assembly, monomer. In terms of processing, methylated at multiple sites, to varying extents.

It localises to the chromosome. The protein localises to the cytoplasm. A chromatin protein, binds double-stranded DNA without sequence specificity. Constrains negative DNA supercoils. This chain is Chromatin protein Cren7, found in Sulfolobus acidocaldarius (strain ATCC 33909 / DSM 639 / JCM 8929 / NBRC 15157 / NCIMB 11770).